The sequence spans 314 residues: tRNA dimethylallyltransferase (314 aa).

11–18 (GPTGSGKT) contacts ATP. Residue 13–18 (TGSGKT) participates in substrate binding. The tract at residues 36–39 (DSMQ) is interaction with substrate tRNA.

The protein belongs to the IPP transferase family. Monomer. The cofactor is Mg(2+).

The enzyme catalyses adenosine(37) in tRNA + dimethylallyl diphosphate = N(6)-dimethylallyladenosine(37) in tRNA + diphosphate. In terms of biological role, catalyzes the transfer of a dimethylallyl group onto the adenine at position 37 in tRNAs that read codons beginning with uridine, leading to the formation of N6-(dimethylallyl)adenosine (i(6)A). The protein is tRNA dimethylallyltransferase of Chlamydia muridarum (strain MoPn / Nigg).